Reading from the N-terminus, the 383-residue chain is tRNA-specific 2-thiouridylase MnmA (383 aa).

ATP contacts are provided by residues 29–36 (GMSGGVDS) and methionine 55. The segment at 115–117 (NPD) is interaction with target base in tRNA. Catalysis depends on cysteine 120, which acts as the Nucleophile. Cysteines 120 and 217 form a disulfide. Glycine 145 lines the ATP pocket. Positions 167–169 (KDQ) are interaction with tRNA. The active-site Cysteine persulfide intermediate is the cysteine 217. An interaction with tRNA region spans residues 329-330 (RY).

The protein belongs to the MnmA/TRMU family.

The protein resides in the cytoplasm. The enzyme catalyses S-sulfanyl-L-cysteinyl-[protein] + uridine(34) in tRNA + AH2 + ATP = 2-thiouridine(34) in tRNA + L-cysteinyl-[protein] + A + AMP + diphosphate + H(+). Catalyzes the 2-thiolation of uridine at the wobble position (U34) of tRNA, leading to the formation of s(2)U34. The sequence is that of tRNA-specific 2-thiouridylase MnmA from Pasteurella multocida (strain Pm70).